The sequence spans 1081 residues: Protein QUIRKY (1081 aa).

The C2 1 domain occupies 1–124 (MNTTPFHSDP…SRRGEEGLVY (124 aa)). 2 disordered regions span residues 154 to 198 (DTAG…MNIP) and 238 to 323 (PQHV…MEKK). Over residues 163 to 176 (QQQQQQQQFHPPQQ) the composition is skewed to low complexity. A compositionally biased stretch (basic and acidic residues) spans 248–257 (NHPHRNDNHP). A compositionally biased stretch (pro residues) spans 258-268 (QRPPSPPPPPS). C2 domains follow at residues 318–440 (TTME…PQWY), 477–605 (SSDA…SKWH), and 652–778 (VCSD…TNSY). Ca(2+) is bound by residues E351, S352, D408, and S413. A run of 3 helical transmembrane segments spans residues 879 to 899 (WYRI…LDNI), 916 to 936 (LVLV…VVMI), and 1024 to 1044 (LFIA…AKMV).

Belongs to the MCTP family. Interacts with SUB/SCM and POQ at the plasma membrane. Binds to SUB/SCM at plasmodesmata (PD) in root epidermal cells to promote tissue morphogenesis. Ca(2+) is required as a cofactor. As to expression, observed mainly in flowers, and, to a lower extent, in seedlings, roots, shoots, leaves, stems and inflorescences. Expressed in the vascular tissues of roots, cotyledons and rosette leaves. Accumulates in roots meristems.

It localises to the cell membrane. It is found in the cytoplasm. The protein resides in the golgi apparatus membrane. The protein localises to the cell junction. Its subcellular location is the plasmodesma. In terms of biological role, may be involved in Ca 2(+)-dependent signaling and membrane trafficking. Plays a role in fruit dehiscence. Components of the machinery involved in organ development mediated by the receptor-like kinase STRUBBELIG (SUB). Collaboratively with SUB and POQ, regulates cell growth anisotropy during gynoecium development, thus linking together cell-cell communication and cellular growth. Together with SUB/SCM, links RLK-dependent signal transduction and intercellular communication mediated by plasmodesmata (PD) to regulate tissue morphogenesis. May function as a signaling molecule by regulating the trafficking of other regulators. The polypeptide is Protein QUIRKY (Arabidopsis thaliana (Mouse-ear cress)).